The following is a 440-amino-acid chain: Protein ABHD8 (440 aa).

Residues 123 to 158 (DPAGSDGRSAPGSGSGSGSGSGSGGRRRRARRPKRT) form a disordered region. The segment covering 124-134 (PAGSDGRSAPG) has biased composition (low complexity). Residues 135-146 (SGSGSGSGSGSG) show a composition bias toward gly residues. A compositionally biased stretch (basic residues) spans 147-158 (GRRRRARRPKRT). Positions 178–280 (VLFFIHGVGG…HKVIMINGGG (103 aa)) constitute an AB hydrolase-1 domain. Residues Ser-253, Asp-371, and His-399 each act as charge relay system in the active site.

This sequence belongs to the AB hydrolase superfamily. Interacts with NLRP3 (via NACHT and LLR domains); this interaction is enhanced in the presence of NLRP3 inflammasome inducers, such as ATP, nigericin, silica, or alum. Interacts with ZDHHC12.

It localises to the cytoplasm. In terms of biological role, negatively regulates NLRP3-driven inflammation. Promotes NLRP3 degradation through the chaperone-mediated autophagy (CMA) pathway, hence attenuating inflammasome activation and IL1B secretion. Acts by recruiting palmitoyltransferase ZDHHC12 to NLRP3, facilitating NLRP3 palmitoylation and subsequent degradation. The sequence is that of Protein ABHD8 from Macaca fascicularis (Crab-eating macaque).